Consider the following 255-residue polypeptide: Gene 54 protein (255 aa).

The chain is Gene 54 protein (54) from Mycobacterium (Mycobacteriophage L5).